Reading from the N-terminus, the 84-residue chain is Tenecin-1 (84 aa).

Residues 1-19 (MKLTIFALVACFFILQIAA) form the signal peptide. A propeptide spanning residues 20 to 41 (FPLEEAATAEEIEQGEHIRVKR) is cleaved from the precursor. Intrachain disulfides connect Cys44–Cys75, Cys61–Cys81, and Cys65–Cys83.

This sequence belongs to the invertebrate defensin family. Type 1 subfamily.

It is found in the secreted. Its function is as follows. Bactericidal protein produced in response to injury. It is cytotoxic to Gram-positive bacteria. The sequence is that of Tenecin-1 from Tenebrio molitor (Yellow mealworm beetle).